The sequence spans 111 residues: uncharacterized protein (111 aa).

The chain crosses the membrane as a helical span at residues 48 to 70 (LFLVPFPASFTRWLTFLFHLVIY).

The protein resides in the membrane. This is an uncharacterized protein from Saccharomyces cerevisiae (strain ATCC 204508 / S288c) (Baker's yeast).